Consider the following 200-residue polypeptide: Glycerol-3-phosphate acyltransferase (200 aa).

The next 5 membrane-spanning stretches (helical) occupy residues 2–22, 51–71, 84–104, 113–133, and 143–163; these read IHLL…AVIV, TAAI…VVAA, IVLL…FFGF, ALGI…ATWV, and SLSA…LLGW.

The protein belongs to the PlsY family. As to quaternary structure, probably interacts with PlsX.

The protein resides in the cell inner membrane. It catalyses the reaction an acyl phosphate + sn-glycerol 3-phosphate = a 1-acyl-sn-glycero-3-phosphate + phosphate. Its pathway is lipid metabolism; phospholipid metabolism. Its function is as follows. Catalyzes the transfer of an acyl group from acyl-phosphate (acyl-PO(4)) to glycerol-3-phosphate (G3P) to form lysophosphatidic acid (LPA). This enzyme utilizes acyl-phosphate as fatty acyl donor, but not acyl-CoA or acyl-ACP. In Thiobacillus denitrificans (strain ATCC 25259 / T1), this protein is Glycerol-3-phosphate acyltransferase.